We begin with the raw amino-acid sequence, 153 residues long: Ribosome maturation factor RimP (153 aa).

It belongs to the RimP family.

It localises to the cytoplasm. In terms of biological role, required for maturation of 30S ribosomal subunits. The sequence is that of Ribosome maturation factor RimP from Clostridium botulinum (strain Kyoto / Type A2).